Consider the following 269-residue polypeptide: 1-(5-phosphoribosyl)-5-[(5-phosphoribosylamino)methylideneamino] imidazole-4-carboxamide isomerase (269 aa).

Aspartate 10 (proton acceptor) is an active-site residue. Catalysis depends on aspartate 132, which acts as the Proton donor.

The protein belongs to the HisA/HisF family.

It localises to the cytoplasm. The catalysed reaction is 1-(5-phospho-beta-D-ribosyl)-5-[(5-phospho-beta-D-ribosylamino)methylideneamino]imidazole-4-carboxamide = 5-[(5-phospho-1-deoxy-D-ribulos-1-ylimino)methylamino]-1-(5-phospho-beta-D-ribosyl)imidazole-4-carboxamide. The protein operates within amino-acid biosynthesis; L-histidine biosynthesis; L-histidine from 5-phospho-alpha-D-ribose 1-diphosphate: step 4/9. The sequence is that of 1-(5-phosphoribosyl)-5-[(5-phosphoribosylamino)methylideneamino] imidazole-4-carboxamide isomerase from Xylella fastidiosa (strain M12).